The following is a 96-amino-acid chain: Aspartyl/glutamyl-tRNA(Asn/Gln) amidotransferase subunit C (96 aa).

This sequence belongs to the GatC family. In terms of assembly, heterotrimer of A, B and C subunits.

The catalysed reaction is L-glutamyl-tRNA(Gln) + L-glutamine + ATP + H2O = L-glutaminyl-tRNA(Gln) + L-glutamate + ADP + phosphate + H(+). It carries out the reaction L-aspartyl-tRNA(Asn) + L-glutamine + ATP + H2O = L-asparaginyl-tRNA(Asn) + L-glutamate + ADP + phosphate + 2 H(+). Functionally, allows the formation of correctly charged Asn-tRNA(Asn) or Gln-tRNA(Gln) through the transamidation of misacylated Asp-tRNA(Asn) or Glu-tRNA(Gln) in organisms which lack either or both of asparaginyl-tRNA or glutaminyl-tRNA synthetases. The reaction takes place in the presence of glutamine and ATP through an activated phospho-Asp-tRNA(Asn) or phospho-Glu-tRNA(Gln). The polypeptide is Aspartyl/glutamyl-tRNA(Asn/Gln) amidotransferase subunit C (Bacillus velezensis (strain DSM 23117 / BGSC 10A6 / LMG 26770 / FZB42) (Bacillus amyloliquefaciens subsp. plantarum)).